The chain runs to 232 residues: 5'-methylthioadenosine/S-adenosylhomocysteine nucleosidase (232 aa).

Catalysis depends on E12, which acts as the Proton acceptor. Substrate contacts are provided by residues G78, I152, and 173-174 (ME). The active-site Proton donor is the D197.

It belongs to the PNP/UDP phosphorylase family. MtnN subfamily. In terms of assembly, homodimer.

It catalyses the reaction S-adenosyl-L-homocysteine + H2O = S-(5-deoxy-D-ribos-5-yl)-L-homocysteine + adenine. The enzyme catalyses S-methyl-5'-thioadenosine + H2O = 5-(methylsulfanyl)-D-ribose + adenine. The catalysed reaction is 5'-deoxyadenosine + H2O = 5-deoxy-D-ribose + adenine. It functions in the pathway amino-acid biosynthesis; L-methionine biosynthesis via salvage pathway; S-methyl-5-thio-alpha-D-ribose 1-phosphate from S-methyl-5'-thioadenosine (hydrolase route): step 1/2. Functionally, catalyzes the irreversible cleavage of the glycosidic bond in both 5'-methylthioadenosine (MTA) and S-adenosylhomocysteine (SAH/AdoHcy) to adenine and the corresponding thioribose, 5'-methylthioribose and S-ribosylhomocysteine, respectively. Also cleaves 5'-deoxyadenosine, a toxic by-product of radical S-adenosylmethionine (SAM) enzymes, into 5-deoxyribose and adenine. Thus, is required for in vivo function of the radical SAM enzymes biotin synthase and lipoic acid synthase, that are inhibited by 5'-deoxyadenosine accumulation. In Klebsiella pneumoniae (strain 342), this protein is 5'-methylthioadenosine/S-adenosylhomocysteine nucleosidase.